A 544-amino-acid polypeptide reads, in one-letter code: CTP synthase (544 aa).

An amidoligase domain region spans residues 1-266; that stretch reads MSTKFIFVTG…DYFVCRRFHL (266 aa). CTP is bound at residue S14. S14 lines the UTP pocket. ATP is bound by residues 15-20 and D72; that span reads SLGKGI. D72 and E140 together coordinate Mg(2+). CTP contacts are provided by residues 147 to 149, 187 to 192, and K223; these read DIE and KTKPTQ. Residues 187 to 192 and K223 each bind UTP; that span reads KTKPTQ. One can recognise a Glutamine amidotransferase type-1 domain in the interval 291–542; that stretch reads TIGMVGKYIE…VAAAHIHQKA (252 aa). G352 provides a ligand contact to L-glutamine. C379 (nucleophile; for glutamine hydrolysis) is an active-site residue. Residues 380 to 383, E403, and R470 contribute to the L-glutamine site; that span reads LGMQ. Active-site residues include H515 and E517.

Belongs to the CTP synthase family. Homotetramer.

It catalyses the reaction UTP + L-glutamine + ATP + H2O = CTP + L-glutamate + ADP + phosphate + 2 H(+). The enzyme catalyses L-glutamine + H2O = L-glutamate + NH4(+). The catalysed reaction is UTP + NH4(+) + ATP = CTP + ADP + phosphate + 2 H(+). It participates in pyrimidine metabolism; CTP biosynthesis via de novo pathway; CTP from UDP: step 2/2. With respect to regulation, allosterically activated by GTP, when glutamine is the substrate; GTP has no effect on the reaction when ammonia is the substrate. The allosteric effector GTP functions by stabilizing the protein conformation that binds the tetrahedral intermediate(s) formed during glutamine hydrolysis. Inhibited by the product CTP, via allosteric rather than competitive inhibition. In terms of biological role, catalyzes the ATP-dependent amination of UTP to CTP with either L-glutamine or ammonia as the source of nitrogen. Regulates intracellular CTP levels through interactions with the four ribonucleotide triphosphates. The polypeptide is CTP synthase (Pseudoalteromonas translucida (strain TAC 125)).